A 199-amino-acid chain; its full sequence is 7-methyl-GTP pyrophosphatase (199 aa).

The Proton acceptor role is filled by Asp-73.

Belongs to the Maf family. YceF subfamily. The cofactor is a divalent metal cation.

The protein localises to the cytoplasm. The catalysed reaction is N(7)-methyl-GTP + H2O = N(7)-methyl-GMP + diphosphate + H(+). Functionally, nucleoside triphosphate pyrophosphatase that hydrolyzes 7-methyl-GTP (m(7)GTP). May have a dual role in cell division arrest and in preventing the incorporation of modified nucleotides into cellular nucleic acids. This is 7-methyl-GTP pyrophosphatase from Bordetella bronchiseptica (strain ATCC BAA-588 / NCTC 13252 / RB50) (Alcaligenes bronchisepticus).